The sequence spans 255 residues: 5'-nucleotidase SurE (255 aa).

A divalent metal cation-binding residues include aspartate 8, aspartate 9, serine 40, and asparagine 93.

It belongs to the SurE nucleotidase family. The cofactor is a divalent metal cation.

The protein resides in the cytoplasm. It catalyses the reaction a ribonucleoside 5'-phosphate + H2O = a ribonucleoside + phosphate. Functionally, nucleotidase that shows phosphatase activity on nucleoside 5'-monophosphates. This is 5'-nucleotidase SurE from Bradyrhizobium sp. (strain ORS 278).